The chain runs to 377 residues: Mechanosensory abnormality protein 6 (377 aa).

The Cytoplasmic segment spans residues 1-13; that stretch reads MGLQSAAAHFINR. A helical transmembrane segment spans residues 14 to 34; sequence FIIWITIFMVACFLLRLLVVL. Topologically, residues 35-377 are extracellular; sequence DLNKRVYNHT…HCDLTHSYIT (343 aa). C48 and C369 are disulfide-bonded. N-linked (GlcNAc...) asparagine glycosylation is present at N94.

The protein belongs to the paraoxonase family. Component of a non-voltage-gated amiloride-sensitive cation channel complex (also called the degenerin channel complex) composed of at least the mec-2, mec-4, mec-6 and mec-10 subunits; the complex mediates mechanotransduction in touch cells. Interacts with mec-2, mec-4 and mec-10. Glycosylated. In terms of tissue distribution, expressed in neurons including the six touch receptors, ventral cord motor neurons, HSN, PVD, PVC, IL1, and several neurons near the nerve ring, in the anal ganglion and in the male tail sensory rays, in muscles including the body wall, vulval, intestinal, anal depressor and sphincter muscles, and in the excretory canal.

The protein resides in the cell membrane. It is found in the cell projection. The protein localises to the axon. In terms of biological role, subunit of an amiloride-sensitive cation channel (degenerin channel complex) permeable for sodium, potassium, lithium and N-methylglucamine, and required for mechanosensory transduction (touch sensitivity). Interacts with degenerin channel proteins and stabilizes the channel. Plays a role in mechanosensory transduction (touch sensitivity). The polypeptide is Mechanosensory abnormality protein 6 (Caenorhabditis elegans).